Here is a 530-residue protein sequence, read N- to C-terminus: Phosphoenolpyruvate carboxykinase (ATP) (530 aa).

The substrate site is built by Arg-59, Tyr-198, and Lys-204. Residues Lys-204, His-223, and 239–247 contribute to the ATP site; that span reads GLSGTGKTT. Residues Lys-204 and His-223 each contribute to the Mn(2+) site. Asp-260 provides a ligand contact to Mn(2+). ATP-binding positions include Glu-288, Arg-325, 440 to 441, and Thr-446; that span reads RI. Residue Arg-325 participates in substrate binding.

It belongs to the phosphoenolpyruvate carboxykinase (ATP) family. Requires Mn(2+) as cofactor.

The protein resides in the cytoplasm. The enzyme catalyses oxaloacetate + ATP = phosphoenolpyruvate + ADP + CO2. It participates in carbohydrate biosynthesis; gluconeogenesis. Involved in the gluconeogenesis. Catalyzes the conversion of oxaloacetate (OAA) to phosphoenolpyruvate (PEP) through direct phosphoryl transfer between the nucleoside triphosphate and OAA. The polypeptide is Phosphoenolpyruvate carboxykinase (ATP) (Azobacteroides pseudotrichonymphae genomovar. CFP2).